Reading from the N-terminus, the 393-residue chain is Ig heavy chain C region (393 aa).

Ig-like domains lie at 63 to 157, 168 to 260, and 270 to 370; these read PTVI…RNIT, PVIK…ASIH, and PSVS…RTVN. 8 N-linked (GlcNAc...) asparagine glycosylation sites follow: Asn-119, Asn-155, Asn-200, Asn-230, Asn-329, Asn-366, Asn-370, and Asn-380.

This is Ig heavy chain C region from Heterodontus francisci (Horn shark).